Here is a 1007-residue protein sequence, read N- to C-terminus: SUPPRESSOR OF ABI3-5 (1007 aa).

Disordered regions lie at residues 1 to 185 (MDPS…RDRE) and 204 to 269 (ESPH…FSAT). 4 stretches are compositionally biased toward basic and acidic residues: residues 40 to 49 (PDERLMRDDV), 94 to 120 (YYHD…RYDG), 138 to 185 (HSRD…RDRE), and 204 to 214 (ESPHKRYEKSR). Residues 227–236 (RSPRGRSHGR) are compositionally biased toward basic residues. Residues 237 to 264 (SYREDSYEGDHWNESERRREYEDRHNQD) show a composition bias toward basic and acidic residues. The 81-residue stretch at 272-352 (ATVVVKGLSM…RKLMFHYSQP (81 aa)) folds into the RRM 1 domain. A RanBP2-type zinc finger spans residues 378–407 (VPTDWICTICGCINFARRTSCFQCNEPKTK). The 81-residue stretch at 432–512 (HVLVVRGLDE…KILRVAYAKS (81 aa)) folds into the RRM 2 domain. Disordered regions lie at residues 556–581 (GEKQ…SAPQ), 631–656 (PDQN…SQQK), 725–755 (HETQ…STGQ), 771–797 (STSN…TLMG), 810–910 (ASSS…GITT), and 945–977 (SGLG…KKVD). A compositionally biased stretch (polar residues) spans 631–645 (PDQNNESKVTENQPD). 2 stretches are compositionally biased toward low complexity: residues 778–793 (SALT…TTGG) and 823–835 (PSAS…VSGS). Basic and acidic residues predominate over residues 849–867 (THREQPQTSYRDRAAERRN). The 47-residue stretch at 928-974 (ESNVGNRMLRNMGWHEGSGLGKDGSGMKEPVQAQGVDRRAGLGSQQK) folds into the G-patch domain.

In terms of assembly, interacts with the pre-spliceosomal component U2AF65A. As to expression, ubiquitous with highest expression in siliques toward the end of seed maturation.

The protein resides in the nucleus. Functionally, splicing factor that controls alternative splicing of the developmental regulator ABI3. Reduces splicing of a cryptic intron in ABI3, leading to a decreased in ABI3-beta transcript. Regulates the splicing of the receptor-like kinase SNC4/LRKL-2.6. In Arabidopsis thaliana (Mouse-ear cress), this protein is SUPPRESSOR OF ABI3-5.